The following is an 848-amino-acid chain: Leucine--tRNA ligase (848 aa).

A compositionally biased stretch (basic and acidic residues) spans methionine 1 to methionine 16. Residues methionine 1 to alanine 30 form a disordered region. The span at glutamate 18 to alanine 30 shows a compositional bias: low complexity. Residues proline 69 to histidine 79 carry the 'HIGH' region motif. The short motif at lysine 614–serine 618 is the 'KMSKS' region element. Lysine 617 contacts ATP.

It belongs to the class-I aminoacyl-tRNA synthetase family.

Its subcellular location is the cytoplasm. The catalysed reaction is tRNA(Leu) + L-leucine + ATP = L-leucyl-tRNA(Leu) + AMP + diphosphate. This is Leucine--tRNA ligase from Nocardioides sp. (strain ATCC BAA-499 / JS614).